The chain runs to 154 residues: Myoglobin (154 aa).

The Globin domain maps to 2 to 148 (GLSDGEWQLV…FRNDMAAKYK (147 aa)). S4 bears the Phosphoserine mark. Residue H65 participates in nitrite binding. Residue H65 coordinates O2. T68 bears the Phosphothreonine mark. Heme b is bound at residue H94.

It belongs to the globin family. Monomeric.

The protein resides in the cytoplasm. It localises to the sarcoplasm. The enzyme catalyses Fe(III)-heme b-[protein] + nitric oxide + H2O = Fe(II)-heme b-[protein] + nitrite + 2 H(+). The catalysed reaction is H2O2 + AH2 = A + 2 H2O. Its function is as follows. Monomeric heme protein which primary function is to store oxygen and facilitate its diffusion within muscle tissues. Reversibly binds oxygen through a pentacoordinated heme iron and enables its timely and efficient release as needed during periods of heightened demand. Depending on the oxidative conditions of tissues and cells, and in addition to its ability to bind oxygen, it also has a nitrite reductase activity whereby it regulates the production of bioactive nitric oxide. Under stress conditions, like hypoxia and anoxia, it also protects cells against reactive oxygen species thanks to its pseudoperoxidase activity. The chain is Myoglobin (MB) from Sapajus apella (Brown-capped capuchin).